The primary structure comprises 371 residues: Envelope glycoprotein M (371 aa).

The Intravirion portion of the chain corresponds to M1 to T13. Residues W14–L34 form a helical membrane-spanning segment. Residues S35 to C79 lie on the Virion surface side of the membrane. A helical transmembrane segment spans residues Y80 to I100. Topologically, residues K101 to L126 are intravirion. The helical transmembrane segment at T127–F147 threads the bilayer. Over R148–S151 the chain is Virion surface. A helical transmembrane segment spans residues M152–V172. Residues T173–T200 lie on the Intravirion side of the membrane. A helical transmembrane segment spans residues L201–L221. The Virion surface segment spans residues C222–A239. A helical transmembrane segment spans residues V240–F260. Over Q261–K264 the chain is Intravirion. A helical membrane pass occupies residues V265–V285. Topologically, residues Q286 to G298 are virion surface. The chain crosses the membrane as a helical span at residues I299–V319. Topologically, residues R320–A371 are intravirion. A disordered region spans residues L346 to A371. Residues S347 to E359 show a composition bias toward basic and acidic residues. A compositionally biased stretch (acidic residues) spans E360–A371.

Belongs to the herpesviridae glycoprotein M family. Interacts (via N-terminus) with gN (via N-terminus). The gM-gN heterodimer forms the gCII complex.

It localises to the virion membrane. The protein localises to the host Golgi apparatus. It is found in the host trans-Golgi network. The protein resides in the host endosome membrane. Its subcellular location is the host nucleus inner membrane. Envelope glycoprotein important for virion assembly and egress. Plays a role in the correct incorporation of gH-gL into virion membrane. Directs the glycoprotein N (gN) to the host trans-Golgi network. The polypeptide is Envelope glycoprotein M (Homo sapiens (Human)).